Reading from the N-terminus, the 6061-residue chain is Intermembrane lipid transfer protein vps13B (6061 aa).

The 114-residue stretch at 2 to 115 (FESLVADIIA…QLELKRKKLE (114 aa)) folds into the Chorein N-terminal domain. Disordered regions lie at residues 590 to 623 (PKYK…NNNK), 803 to 828 (DIKN…NNKN), 1386 to 1414 (QQQQ…NVSS), 1604 to 1644 (SSNN…GTLS), 2747 to 2784 (QTNQ…EDQE), 2950 to 2972 (GLNN…NSST), 3364 to 3401 (LNRN…DDDD), 3855 to 3876 (QQQQ…RNKK), 4011 to 4068 (QQQQ…FKNN), 4107 to 4132 (ELEK…RPDE), 4262 to 4297 (NSSN…YNGR), 4321 to 4442 (SQSI…TSPG), 4601 to 4631 (TSSP…KKSL), 4753 to 4797 (NNNN…TQEF), 4861 to 4882 (NAGG…SISQ), 5003 to 5030 (LATK…DGIE), and 5372 to 5429 (NINN…IGQD). Residues 595-614 (HQENKENKENQENQENENKN) show a composition bias toward basic and acidic residues. Residues 1395–1406 (QQQKEEEQHGGE) show a composition bias toward basic and acidic residues. The segment covering 2747 to 2756 (QTNQNNQKNR) has biased composition (polar residues). A compositionally biased stretch (acidic residues) spans 2774-2784 (NDNDEYDEDQE). Residues 3388 to 3401 (IDDDDGDGDDDDDD) are compositionally biased toward acidic residues. Over residues 4015 to 4024 (QEKEKEIEKE) the composition is skewed to basic and acidic residues. A compositionally biased stretch (low complexity) spans 4031-4040 (LKNNNNISIN). The segment covering 4041-4057 (DNDDDDDDDDNDNDENN) has biased composition (acidic residues). Residues 4058 to 4068 (NENYEFNFKNN) show a composition bias toward low complexity. Over residues 4107 to 4120 (ELEKKKRERKENSK) the composition is skewed to basic and acidic residues. 2 stretches are compositionally biased toward low complexity: residues 4330–4383 (TTTT…VGSN) and 4399–4429 (NNNN…NNNN). The segment covering 4430–4441 (SNDNQVNFSTSP) has biased composition (polar residues). Composition is skewed to low complexity over residues 4601 to 4617 (TSSP…NYNN) and 4753 to 4784 (NNNN…SNEN). Polar residues predominate over residues 4785–4794 (SQDQPPSIKT). 2 stretches are compositionally biased toward low complexity: residues 5013–5030 (DNSN…DGIE) and 5372–5384 (NINN…NNDN). Residues 5385 to 5409 (NKNKNNNDKNKNNDKNNKNNNDKNN) show a composition bias toward basic and acidic residues. Positions 5410 to 5421 (NDNNNNNNNNNN) are enriched in low complexity.

This sequence belongs to the VPS13 family.

The protein resides in the membrane. Its function is as follows. Mediates the transfer of lipids between membranes at organelle contact sites. The sequence is that of Intermembrane lipid transfer protein vps13B (vps13B) from Dictyostelium discoideum (Social amoeba).